Reading from the N-terminus, the 298-residue chain is uncharacterized protein (298 aa).

Residues 1 to 19 form the signal peptide; the sequence is MFRKFLFIQLLIVTSLVKA. Residues 278-298 are disordered; sequence RNNPPLKNNNAKSKNSYETYK. Residues 279 to 298 are compositionally biased toward low complexity; it reads NNPPLKNNNAKSKNSYETYK.

To R.prowazekii RP296.

This is an uncharacterized protein from Rickettsia prowazekii (strain Madrid E).